The primary structure comprises 268 residues: MTLQKKIIELLGVKPAIIPEIEIKNCVDFLKKYLVNHVHIKSLIVGVSGGQDSTLTAKLCQMTAETLRKEKNDITYQFIALRLPYGIQYDEKDCQDAIRFIQPDQIFNVNIKKAVLSSEKSLKKSGVIISDYVRGNEKARERMKVQYSVAAMKQGLVVGTGHAAENITGFFTKYGDSGTDINPIAKLNKRQIRLLLKNLNCPKHLYLKKPMADLEDEHPQQDDESVLGVTYDVIDSYLEQKKIDIRSQKIIEALYLNTLHKRNLPITQ.

Glycine 46–serine 53 contributes to the ATP binding site. A Mg(2+)-binding site is contributed by aspartate 52. Arginine 140 lines the deamido-NAD(+) pocket. Threonine 160 lines the ATP pocket. Glutamate 165 contributes to the Mg(2+) binding site. The deamido-NAD(+) site is built by lysine 173 and aspartate 180. Lysine 189 lines the ATP pocket. Histidine 260–lysine 261 provides a ligand contact to deamido-NAD(+).

Belongs to the NAD synthetase family. In terms of assembly, homodimer.

It carries out the reaction deamido-NAD(+) + NH4(+) + ATP = AMP + diphosphate + NAD(+) + H(+). It participates in cofactor biosynthesis; NAD(+) biosynthesis; NAD(+) from deamido-NAD(+) (ammonia route): step 1/1. Its function is as follows. Catalyzes the ATP-dependent amidation of deamido-NAD to form NAD. Uses ammonia as a nitrogen source. This Buchnera aphidicola subsp. Acyrthosiphon pisum (strain Tuc7) protein is NH(3)-dependent NAD(+) synthetase.